Reading from the N-terminus, the 124-residue chain is Urease subunit beta (124 aa).

It belongs to the urease beta subunit family. As to quaternary structure, heterotrimer of UreA (gamma), UreB (beta) and UreC (alpha) subunits. Three heterotrimers associate to form the active enzyme.

The protein resides in the cytoplasm. The catalysed reaction is urea + 2 H2O + H(+) = hydrogencarbonate + 2 NH4(+). Its pathway is nitrogen metabolism; urea degradation; CO(2) and NH(3) from urea (urease route): step 1/1. This chain is Urease subunit beta, found in Halalkalibacterium halodurans (strain ATCC BAA-125 / DSM 18197 / FERM 7344 / JCM 9153 / C-125) (Bacillus halodurans).